The primary structure comprises 401 residues: Phosphoglycerate kinase (401 aa).

Substrate is bound by residues 24–26, Arg-40, 63–66, Arg-122, and Arg-155; these read DFN and HFGR. Residues Lys-206, Gly-297, Glu-328, and 357–360 each bind ATP; that span reads GGDS.

Belongs to the phosphoglycerate kinase family. In terms of assembly, monomer.

Its subcellular location is the cytoplasm. It catalyses the reaction (2R)-3-phosphoglycerate + ATP = (2R)-3-phospho-glyceroyl phosphate + ADP. The protein operates within carbohydrate degradation; glycolysis; pyruvate from D-glyceraldehyde 3-phosphate: step 2/5. In Prochlorococcus marinus (strain NATL2A), this protein is Phosphoglycerate kinase.